The following is an 806-amino-acid chain: ATP-dependent zinc metalloprotease FTSH 9, chloroplastic (806 aa).

Residues 1–62 (MTSIELLSPL…SSIQLPQSVP (62 aa)) constitute a chloroplast transit peptide. The interval 84-116 (SSRTIVNCQEGDQKASSSEGEGKTNKDKGRKQG) is disordered. 2 consecutive transmembrane segments (helical) span residues 133–153 (IIQA…MFVV) and 271–291 (GGFF…AGLL). 369–376 (GLPGTGKT) contacts ATP. Residue histidine 594 coordinates Zn(2+). The active site involves glutamate 595. The Zn(2+) site is built by histidine 598 and aspartate 677.

In the N-terminal section; belongs to the AAA ATPase family. The protein in the C-terminal section; belongs to the peptidase M41 family. Zn(2+) serves as cofactor.

It is found in the plastid. The protein resides in the chloroplast thylakoid membrane. In terms of biological role, probable ATP-dependent zinc metallopeptidase. The chain is ATP-dependent zinc metalloprotease FTSH 9, chloroplastic (FTSH9) from Arabidopsis thaliana (Mouse-ear cress).